A 462-amino-acid polypeptide reads, in one-letter code: tRNA modification GTPase MnmE (462 aa).

(6S)-5-formyl-5,6,7,8-tetrahydrofolate-binding residues include R26, E91, and R130. Residues 228–382 (GLSTAKIGRP…IEERINDIFF (155 aa)) enclose the TrmE-type G domain. A K(+)-binding site is contributed by N238. Residues 238–243 (NVGKSQ), 257–263 (TDIEGTT), and 282–285 (DTAG) each bind GTP. S242 contributes to the Mg(2+) binding site. Residues T257, I259, and T262 each coordinate K(+). T263 lines the Mg(2+) pocket. K462 is a binding site for (6S)-5-formyl-5,6,7,8-tetrahydrofolate.

It belongs to the TRAFAC class TrmE-Era-EngA-EngB-Septin-like GTPase superfamily. TrmE GTPase family. As to quaternary structure, homodimer. Heterotetramer of two MnmE and two MnmG subunits. K(+) serves as cofactor.

The protein localises to the cytoplasm. In terms of biological role, exhibits a very high intrinsic GTPase hydrolysis rate. Involved in the addition of a carboxymethylaminomethyl (cmnm) group at the wobble position (U34) of certain tRNAs, forming tRNA-cmnm(5)s(2)U34. The chain is tRNA modification GTPase MnmE from Streptococcus agalactiae.